Here is a 682-residue protein sequence, read N- to C-terminus: Homeobox-leucine zipper protein HDG7 (682 aa).

A disordered region spans residues 33–65 (LSDDSFDAMSGDEDKQEQRPKKKKRKTKYHRHT). Basic residues predominate over residues 52–65 (PKKKKRKTKYHRHT). A DNA-binding region (homeobox) is located at residues 57–116 (RKTKYHRHTSYQIQELESFFKECPHPNEKQRLELGKKLTLESKQIKFWFQNRRTQMKTQL). Residues 105–186 (FQNRRTQMKT…LDRICALANR (82 aa)) adopt a coiled-coil conformation. Positions 214-429 (SGGTSLMFMD…LQRQCESFTM (216 aa)) constitute an START domain.

The protein belongs to the HD-ZIP homeobox family. Class IV subfamily. In terms of assembly, interacts with AIL7/PLT7. Expressed in cells around the base of leaf primordia, in the outermost 2 to 3 cell layers along the boundary between two leaf primordia. Expressed in lateral root primordia and tips, and in the epidermal boundaries of two cotyledons at heart-stage embryo.

It is found in the nucleus. Probable transcription factor that binds to the DNA sequence 5'-GCATTAAATGC-3'. Seems to promote cell differentiation. In Arabidopsis thaliana (Mouse-ear cress), this protein is Homeobox-leucine zipper protein HDG7.